Consider the following 69-residue polypeptide: MKMIKVKVIGRNIEKEIEWREGMKVRDILRAVGFNTESAIAKVNGKVVLEDDEVKDGDFVEVIPVVSGG.

Lys55 is covalently cross-linked (Glycyl lysine isopeptide (Lys-Gly) (interchain with G-Cter in SAMP2)). Gly69 is subject to 1-thioglycine; alternate. A Glycyl adenylate; alternate modification is found at Gly69. Residue Gly69 forms a Glycyl lysine isopeptide (Gly-Lys) (interchain with K-? in acceptor proteins); alternate linkage.

The C-terminal glycine is likely acyl-adenylated (-COAMP) by UbaA, and also probably thiocarboxylated (-COSH) to function in sulfur transfer.

Functions as a protein modifier covalently attached to lysine residues of substrate proteins, as well as a sulfur carrier in tRNA thiolation. The protein modification process is termed sampylation and involves the formation of an isopeptide bond between the SAMP2 C-terminal glycine carboxylate and the epsilon-amino group of lysine residues on target proteins. Is able to form polymeric chains with itself likely at Lys-55, similar to ubiquitin and other ubiquitin-like proteins. May serve as a proteolytic signal in the cell to target proteins for degradation by proteasomes. The chain is Small archaeal modifier protein 2 from Pyrococcus furiosus (strain ATCC 43587 / DSM 3638 / JCM 8422 / Vc1).